We begin with the raw amino-acid sequence, 134 residues long: Photosystem II lipoprotein Psb27 (134 aa).

Residues 1-24 (MSFLKNQLSRLLALILVVAIGLTA) form the signal peptide. Cys25 carries N-palmitoyl cysteine lipidation. Cys25 carries S-diacylglycerol cysteine lipidation.

This sequence belongs to the Psb27 family. As to quaternary structure, monomer. Forms a complex with a monomeric, partially assembled PSII. This is probably the complex in which D1 is assembled and/or replaced. Present in 6-10% of PSII complexes; mostly in monomeric PSII. These PSII do not evolve oxygen, do not have an assembled calcium-manganese-oxide cluster. Psb27-containing PSII seem to be assembly intermediates; a wild-type strain includes the intrinsic membrane proteins, Psb27, Pbs28, substoichiometric amounts of PsbO and PsbQ but no PsbU or PsbV, while a ctpA deletion mutant includes the intrinsic membrane proteins (D1 as precursor), Psb27, a very low amount of PsbO and PsbQ, but no PsbU or PsbV. Small amounts of Psb27 interact with the lumenal domain of CP43 (psbC) in wild-type and a ctpA mutant. A small amount can also be detected in monomeric and trimeric photosystem I (PSI), possibly via association with PsaB.

It localises to the cellular thylakoid membrane. Plays a role in the repair and/or biogenesis of the calcium-manganese-oxide cluster on the lumenal face of the thylakoid membrane. Photosystem II (PSII) complexes containing this protein are monomeric, are assembly intermediates lacking the calcium-manganese-oxide cluster and miss some of the lumenal subunits. Probably blocks binding of some of the small lumenal subunits. This Synechocystis sp. (strain ATCC 27184 / PCC 6803 / Kazusa) protein is Photosystem II lipoprotein Psb27.